The following is an 87-amino-acid chain: Cx9C motif-containing protein 4, mitochondrial (87 aa).

A CHCH domain is found at 9 to 51; that stretch reads ENACKPFACAIQDCLIENGYNESKCTKAIDNLYKCCKQFYEEN. 2 short sequence motifs (cx9C motif) span residues 12–22 and 33–43; these read CKPFACAIQDC and CTKAIDNLYKC. 2 disulfides stabilise this stretch: Cys12–Cys43 and Cys22–Cys33.

This sequence belongs to the CMC4 family.

The protein localises to the mitochondrion intermembrane space. In Clavispora lusitaniae (strain ATCC 42720) (Yeast), this protein is Cx9C motif-containing protein 4, mitochondrial (CMC4).